The chain runs to 405 residues: Imidazolonepropionase (405 aa).

Fe(3+) contacts are provided by His-73 and His-75. Residues His-73 and His-75 each coordinate Zn(2+). 4-imidazolone-5-propanoate-binding residues include Arg-82, Tyr-145, and His-178. Tyr-145 is an N-formimidoyl-L-glutamate binding site. His-243 lines the Fe(3+) pocket. His-243 provides a ligand contact to Zn(2+). A 4-imidazolone-5-propanoate-binding site is contributed by Gln-246. Asp-318 contacts Fe(3+). Asp-318 serves as a coordination point for Zn(2+). N-formimidoyl-L-glutamate contacts are provided by Asn-320 and Gly-322. Thr-323 is a 4-imidazolone-5-propanoate binding site.

Belongs to the metallo-dependent hydrolases superfamily. HutI family. Zn(2+) is required as a cofactor. It depends on Fe(3+) as a cofactor.

Its subcellular location is the cytoplasm. It catalyses the reaction 4-imidazolone-5-propanoate + H2O = N-formimidoyl-L-glutamate. It functions in the pathway amino-acid degradation; L-histidine degradation into L-glutamate; N-formimidoyl-L-glutamate from L-histidine: step 3/3. Functionally, catalyzes the hydrolytic cleavage of the carbon-nitrogen bond in imidazolone-5-propanoate to yield N-formimidoyl-L-glutamate. It is the third step in the universal histidine degradation pathway. This is Imidazolonepropionase from Brucella suis (strain ATCC 23445 / NCTC 10510).